An 872-amino-acid chain; its full sequence is Alanine--tRNA ligase (872 aa).

His-567, His-571, Cys-669, and His-673 together coordinate Zn(2+).

The protein belongs to the class-II aminoacyl-tRNA synthetase family. It depends on Zn(2+) as a cofactor.

Its subcellular location is the cytoplasm. It carries out the reaction tRNA(Ala) + L-alanine + ATP = L-alanyl-tRNA(Ala) + AMP + diphosphate. Functionally, catalyzes the attachment of alanine to tRNA(Ala) in a two-step reaction: alanine is first activated by ATP to form Ala-AMP and then transferred to the acceptor end of tRNA(Ala). Also edits incorrectly charged Ser-tRNA(Ala) and Gly-tRNA(Ala) via its editing domain. This is Alanine--tRNA ligase from Streptococcus pyogenes serotype M2 (strain MGAS10270).